The sequence spans 675 residues: Methionine--tRNA ligase (675 aa).

The short motif at 15-25 (PYANGSIHLGH) is the 'HIGH' region element. Zn(2+)-binding residues include cysteine 146, cysteine 149, cysteine 159, and cysteine 162. The 'KMSKS' region signature appears at 332 to 336 (KMSKS). Lysine 335 is a binding site for ATP. Residues 573–675 (DFAKVDMRIA…SGAQPGMQVK (103 aa)) enclose the tRNA-binding domain.

It belongs to the class-I aminoacyl-tRNA synthetase family. MetG type 1 subfamily. As to quaternary structure, homodimer. It depends on Zn(2+) as a cofactor.

The protein resides in the cytoplasm. It catalyses the reaction tRNA(Met) + L-methionine + ATP = L-methionyl-tRNA(Met) + AMP + diphosphate. In terms of biological role, is required not only for elongation of protein synthesis but also for the initiation of all mRNA translation through initiator tRNA(fMet) aminoacylation. The chain is Methionine--tRNA ligase from Yersinia pseudotuberculosis serotype O:3 (strain YPIII).